The sequence spans 321 residues: Transcriptional activator protein Pur-alpha (321 aa).

The segment at 1-54 is disordered; sequence MADRDSGSEQGGAALGSGGSLGHPGSGSGSGGGGGGGGGGGGSGGGGGAPGGLQ. A2 is subject to N-acetylalanine. Gly residues predominate over residues 9–51; it reads EQGGAALGSGGSLGHPGSGSGSGGGGGGGGGGGGSGGGGGAPG. S181 carries the phosphoserine modification. A compositionally biased stretch (low complexity) spans 294-313; it reads LHQQQQQQQEETTAATLLLQ. The tract at residues 294–321 is disordered; sequence LHQQQQQQQEETTAATLLLQGEEEGEED.

Belongs to the PUR DNA-binding protein family. Homodimer, heterodimer with PURB and heterotrimer with PURB and YBX1/Y-box protein 1. Interacts with FMR1; this interaction occurs in association with polyribosome.

It localises to the nucleus. Functionally, this is a probable transcription activator that specifically binds the purine-rich single strand of the PUR element located upstream of the c-Myc gene. May play a role in the initiation of DNA replication and in recombination. The protein is Transcriptional activator protein Pur-alpha (Pura) of Mus musculus (Mouse).